The following is a 105-amino-acid chain: MIDIIVKEDKRLITVQTPEGDEVFYTLSFSDGHKILKRSSARLRNNIYAIGVANIRWMLVDMDNMILSEYIHHVDILKDIDRKMREMGYIVISEWQHANKKGTRR.

This sequence belongs to the phi29likevirus gp16.8 family.

In Bacillus phage phi29 (Bacteriophage phi-29), this protein is Gene product 16.8 (16.8).